A 205-amino-acid chain; its full sequence is Protein phosphatase inhibitor 2 family member C (205 aa).

2 disordered regions span residues 1-51 (MSAS…DESS) and 70-114 (EPGT…DHSC). The tract at residues 12–17 (KGILKN) is required for binding PPP1CC. The segment covering 19-34 (SSSGSSVATSGQQSGG) has biased composition (low complexity). A required for binding PPP1CC region spans residues 43–55 (KSQKWDESSILAT). Basic and acidic residues predominate over residues 84–102 (DSVRDVEGEDSVRGVEGKE). The segment at 147–150 (HYNE) is required for binding PPP1CC catalytic center, displacing metal ions and inhibition of PPP1CC catalytic activity. The interval 165–205 (LQSEDDENEERPQATNEEKTAAEESEEAPLSGGLQTQSCDP) is disordered. Over residues 174-186 (ERPQATNEEKTAA) the composition is skewed to basic and acidic residues.

This sequence belongs to the protein phosphatase inhibitor 2 family.

Functions as a protein phosphatase inhibitor. It inhibits activity of the catalytic subunit of PP1 and weakly inhibits the activity of myosin-associated phosphates. In Macaca fascicularis (Crab-eating macaque), this protein is Protein phosphatase inhibitor 2 family member C (PPP1R2C).